Here is a 242-residue protein sequence, read N- to C-terminus: DnaJ homolog subfamily B member 6 (242 aa).

Residues 3–69 (EYYDVLGVQR…KKRDIYDKYG (67 aa)) form the J domain.

Homooligomer.

It localises to the cytoplasm. Its subcellular location is the perinuclear region. The protein localises to the nucleus. Has a stimulatory effect on the ATPase activity of HSP70 in a dose-dependent and time-dependent manner and hence acts as a co-chaperone of HSP70. Plays an indispensable role in the organization of KRT8/KRT18 filaments. Acts as an endogenous molecular chaperone for neuronal proteins including huntingtin. Suppresses aggregation and toxicity of polyglutamine-containing, aggregation-prone proteins. Also reduces cellular toxicity and caspase-3 activity. This Xenopus tropicalis (Western clawed frog) protein is DnaJ homolog subfamily B member 6.